A 319-amino-acid chain; its full sequence is Dehydrogenase/reductase SDR family member 9 (319 aa).

Positions 1–17 (MLFWVLGLLILCGFLWT) are cleaved as a signal peptide. Residues 34–58 (ITGC…HVIA) and Asp-83 contribute to the NAD(+) site. Ser-164 lines the substrate pocket. Tyr-176 functions as the Proton acceptor in the catalytic mechanism. Lys-180 is a binding site for NAD(+).

It belongs to the short-chain dehydrogenases/reductases (SDR) family. As to quaternary structure, homotetramer. In terms of tissue distribution, highly expressed in trachea and epidermis. Detected at lower levels in spinal cord, bone marrow, brain, tongue, esophagus, heart, colon, testis, placenta, lung, skeletal muscle and lymph node.

Its subcellular location is the microsome membrane. It localises to the endoplasmic reticulum membrane. The enzyme catalyses 3beta-hydroxy-5alpha-pregnane-20-one + NAD(+) = 5alpha-pregnane-3,20-dione + NADH + H(+). The catalysed reaction is 17beta-hydroxy-5alpha-androstan-3-one + NAD(+) = 5alpha-androstan-3,17-dione + NADH + H(+). It catalyses the reaction androsterone + NAD(+) = 5alpha-androstan-3,17-dione + NADH + H(+). It carries out the reaction 5alpha-androstane-3alpha,17beta-diol + NAD(+) = 17beta-hydroxy-5alpha-androstan-3-one + NADH + H(+). The enzyme catalyses all-trans-retinol + NAD(+) = all-trans-retinal + NADH + H(+). The catalysed reaction is 3alpha-hydroxy-5alpha-pregnan-20-one + NAD(+) = 5alpha-pregnane-3,20-dione + NADH + H(+). Its function is as follows. 3-alpha-hydroxysteroid dehydrogenase that converts 3-alpha-tetrahydroprogesterone (allopregnanolone) to dihydroxyprogesterone and 3-alpha-androstanediol to dihydroxyprogesterone. Also plays a role in the biosynthesis of retinoic acid from retinaldehyde. Can utilize both NADH and NADPH. This is Dehydrogenase/reductase SDR family member 9 (DHRS9) from Homo sapiens (Human).